Reading from the N-terminus, the 157-residue chain is MSKKVTNIVEELVTPILADMDLELVDIEYVKEGKNWFLRVFIDSDNGVDIEQCGMVSEKLSEKLDEVDPIPHNYFLEVSSPGAERPLKKPKDFTKAIGKNVYIKTYEPIEGEKEFEGELIGFDGTTVSVTVKDKTRKKTIDIPYEKVASARLAVIFF.

This sequence belongs to the RimP family.

Its subcellular location is the cytoplasm. Functionally, required for maturation of 30S ribosomal subunits. In Geobacillus sp. (strain WCH70), this protein is Ribosome maturation factor RimP.